The primary structure comprises 770 residues: MSMMTSTPTKRSVKLDDIWPELEEGIYKIITDLNKGFPKQKWIALYTHVYDYCAASQSKSSAKVGMPKQQASGANYVGEDLYNRLNLFLKKHMSQLLKLTETKMDEPLLNYYYTEWDRYTSAMKYINNIFQYMNRYWIKREIDDGKKEVYEIFILSLVIWRDCLFTPLKQRLTNSLLDIIESERNGYQINTHLIKGVINGYVSLGLNREKPKETILQVYKSGFEELFLTATENYYTNESAKFISENSVADYMKKVETRLNEEVKRVQQYLHQNTESELIAKCEKVLIEKHVEVIWNEFQTLLEKDKIPDLTRMYSLLSRIPRGLEPLRTTLEKHVQNVGLQAVSSIATNGVIEPKVYIETLLKVFKKYNELVTGAFRSDTGFVASLDKACRRFINENAVTIAAKSSSKSPELLARFTDFLLKKSPNNPEESEMEQLLNDVMIVFKYIEDKDVFQDFYSKMLAKRLIHGTSTSEDLEGTMIGKLKSTCGYEYTSKLQRMFTDMSLSRELLDRFNNHIEQVERSSLNIDFSVLVLATGSWPLQPPSTNFSIPKELQACEQLFQKFYQNQHSGRKLNWLHHLSKGELKTKYLQTSKSGYTLQCSTYQIGVLLQFNQYETLTSEEIQESTQLIDSVLKGTLTSLAKSKILLADPPLDDEEIAKTTKFSLNKQFKNKKTKIFINVPVLTQVKEEIDSIHKTVEEDRKLQIQAAIVRIMKMRKQLAHSGLMTEVISQLQTRFNPKVNIIKKCIDILIEKEYLMRVEGKKDHYSYVA.

The Cullin neddylation domain occupies aspartate 700 to glycine 761. Lysine 714 is covalently cross-linked (Glycyl lysine isopeptide (Lys-Gly) (interchain with G-Cter in NEDD8)).

The protein belongs to the cullin family. Part of a complex that includes culA, fbxA and regA. Formation of this complex is dependent on the MAP kinase erkB. In terms of processing, neddylated; which enhances the ubiquitination activity of SCF.

The protein operates within protein modification; protein ubiquitination. Its function is as follows. Probable core component of cullin-based SCF-like E3 ubiquitin-protein ligase complexes which mediate the ubiquitination and subsequent proteasomal degradation of target proteins. The E3 ubiquitin-protein ligase activity of the complex is dependent on the neddylation of the cullin subunit. Required at several stages during development. CulA and fbxA regulate multicellular development by targeting regA for degradation via a pathway that requires erkB function, leading to an increase in cAMP and PKA activity. The protein is Cullin-1 (culA) of Dictyostelium discoideum (Social amoeba).